The following is a 90-amino-acid chain: Small ribosomal subunit protein bS16 (90 aa).

The protein belongs to the bacterial ribosomal protein bS16 family.

The protein is Small ribosomal subunit protein bS16 of Lactobacillus gasseri (strain ATCC 33323 / DSM 20243 / BCRC 14619 / CIP 102991 / JCM 1131 / KCTC 3163 / NCIMB 11718 / NCTC 13722 / AM63).